The primary structure comprises 437 residues: Chromosomal replication initiator protein DnaA (437 aa).

The interval 1-82 (MIFPIWKKCL…KIIINIEKKK (82 aa)) is domain I, interacts with DnaA modulators. The interval 82–101 (KLEKKKCIYKKKNIQIYLHS) is domain II. A domain III, AAA+ region region spans residues 102-318 (EINKKYQFHN…GILKKIQILS (217 aa)). Residues Gly-146, Gly-148, Lys-149, and Thr-150 each coordinate ATP. Residues 319–437 (ILNKEKITIN…FIYLFNQLNA (119 aa)) form a domain IV, binds dsDNA region.

This sequence belongs to the DnaA family. As to quaternary structure, oligomerizes as a right-handed, spiral filament on DNA at oriC.

It localises to the cytoplasm. Functionally, plays an essential role in the initiation and regulation of chromosomal replication. ATP-DnaA binds to the origin of replication (oriC) to initiate formation of the DNA replication initiation complex once per cell cycle. Binds the DnaA box (a 9 base pair repeat at the origin) and separates the double-stranded (ds)DNA. Forms a right-handed helical filament on oriC DNA; dsDNA binds to the exterior of the filament while single-stranded (ss)DNA is stabiized in the filament's interior. The ATP-DnaA-oriC complex binds and stabilizes one strand of the AT-rich DNA unwinding element (DUE), permitting loading of DNA polymerase. After initiation quickly degrades to an ADP-DnaA complex that is not apt for DNA replication. Binds acidic phospholipids. The polypeptide is Chromosomal replication initiator protein DnaA (Buchnera aphidicola subsp. Cinara cedri (strain Cc)).